A 490-amino-acid chain; its full sequence is MRINPTTSGSEVSAVEKKNLGRIVKIIGPVLDVAFPPGKMPNIYNALVVQGRDNEQTNVTCEVQQLLGNNRVRAVAMSDTDGLMRGMEVIDTRAPISVPVGGSTLGRIFNVLGQPVDNLGPVDTNTTSPIHRSAPAFIQLDTKLSIFETGIKVVDLLAPYRRGGKIGLFGGAGVGKTVLIMELINNIAKAHGGVSVFGGVGERTREGNDLYLEMKESGVINEENIAESKVALVYGQMNEPPGARMRVGLTALTMAEYFRDVNEQDVLLFIDNIFRFVQAGSEVSALLGRMPSAVGYQPTLSTEMGSLQERITSTKEGSITSIQAVYVPADDLTDPAPATTFAHLDATTVLSRGLAAKGIYPAVDPLDSTSTMLQPRIVGEEHYETAQRVKQTLQRYKELQDIIAILGLDELSEEDRLTVARARKIERFLSQPFFVAEVFTGSPGKYVGLAETIRGFQLILSGELDGLPEQAFYLVGNIDEATAKAMNLKT.

170 to 177 (GGAGVGKT) lines the ATP pocket.

Belongs to the ATPase alpha/beta chains family. In terms of assembly, F-type ATPases have 2 components, CF(1) - the catalytic core - and CF(0) - the membrane proton channel. CF(1) has five subunits: alpha(3), beta(3), gamma(1), delta(1), epsilon(1). CF(0) has four main subunits: a(1), b(1), b'(1) and c(9-12).

Its subcellular location is the plastid. It is found in the chloroplast thylakoid membrane. It catalyses the reaction ATP + H2O + 4 H(+)(in) = ADP + phosphate + 5 H(+)(out). Its function is as follows. Produces ATP from ADP in the presence of a proton gradient across the membrane. The catalytic sites are hosted primarily by the beta subunits. This chain is ATP synthase subunit beta, chloroplastic, found in Ipomoea obscura (Obscure morning glory).